Reading from the N-terminus, the 364-residue chain is Putative agmatine deiminase (364 aa).

The Amidino-cysteine intermediate role is filled by Cys355.

The protein belongs to the agmatine deiminase family.

It carries out the reaction agmatine + H2O = N-carbamoylputrescine + NH4(+). In Mycoplasma capricolum subsp. capricolum (strain California kid / ATCC 27343 / NCTC 10154), this protein is Putative agmatine deiminase.